The chain runs to 138 residues: Cysteine desulfuration protein SufE (138 aa).

Catalysis depends on cysteine 51, which acts as the Cysteine persulfide intermediate.

The protein belongs to the SufE family. In terms of assembly, homodimer. Interacts with SufS.

It localises to the cytoplasm. The protein operates within cofactor biosynthesis; iron-sulfur cluster biosynthesis. Functionally, participates in cysteine desulfuration mediated by SufS. Cysteine desulfuration mobilizes sulfur from L-cysteine to yield L-alanine and constitutes an essential step in sulfur metabolism for biosynthesis of a variety of sulfur-containing biomolecules. Functions as a sulfur acceptor for SufS, by mediating the direct transfer of the sulfur atom from the S-sulfanylcysteine of SufS, an intermediate product of cysteine desulfuration process. In Shigella flexneri serotype 5b (strain 8401), this protein is Cysteine desulfuration protein SufE.